Here is a 731-residue protein sequence, read N- to C-terminus: 1,4-alpha-glucan branching enzyme GlgB (731 aa).

D409 serves as the catalytic Nucleophile. The active-site Proton donor is the E462.

Belongs to the glycosyl hydrolase 13 family. GlgB subfamily. In terms of assembly, monomer.

The catalysed reaction is Transfers a segment of a (1-&gt;4)-alpha-D-glucan chain to a primary hydroxy group in a similar glucan chain.. The protein operates within glycan biosynthesis; glycogen biosynthesis. Functionally, catalyzes the formation of the alpha-1,6-glucosidic linkages in glycogen by scission of a 1,4-alpha-linked oligosaccharide from growing alpha-1,4-glucan chains and the subsequent attachment of the oligosaccharide to the alpha-1,6 position. The chain is 1,4-alpha-glucan branching enzyme GlgB from Roseobacter denitrificans (strain ATCC 33942 / OCh 114) (Erythrobacter sp. (strain OCh 114)).